We begin with the raw amino-acid sequence, 243 residues long: Probable ubiquitin-conjugating enzyme E2 33 (243 aa).

A UBC core domain is found at 5–162 (ACIKRLQKEY…FPEYVEKYSQ (158 aa)). Cys87 (glycyl thioester intermediate) is an active-site residue. The tract at residues 168 to 197 (EEAATQQTTTSENQDFPQKDNAKVESEKSV) is disordered. A compositionally biased stretch (basic and acidic residues) spans 184–197 (PQKDNAKVESEKSV). Residues 220-240 (LPGWIVLLLVSIVGVVMALPL) form a helical membrane-spanning segment.

Belongs to the ubiquitin-conjugating enzyme family.

Its subcellular location is the membrane. It catalyses the reaction S-ubiquitinyl-[E1 ubiquitin-activating enzyme]-L-cysteine + [E2 ubiquitin-conjugating enzyme]-L-cysteine = [E1 ubiquitin-activating enzyme]-L-cysteine + S-ubiquitinyl-[E2 ubiquitin-conjugating enzyme]-L-cysteine.. The protein operates within protein modification; protein ubiquitination. In terms of biological role, accepts the ubiquitin from the E1 complex and catalyzes its covalent attachment to other proteins. This Arabidopsis thaliana (Mouse-ear cress) protein is Probable ubiquitin-conjugating enzyme E2 33 (UBC33).